The chain runs to 291 residues: GTP-binding protein RHO4 (291 aa).

Residues 14–31 (GNESNIVSQGSPSSSNLP) show a composition bias toward polar residues. The interval 14–45 (GNESNIVSQGSPSSSNLPESPGTLDEKNLPRL) is disordered. 79-86 (GDGAVGKT) provides a ligand contact to GTP. Residues 101-109 (YIPTIFENY) carry the Effector region motif. GTP-binding positions include 127–131 (DTAGQ) and 185–188 (LKSD). The disordered stretch occupies residues 250 to 273 (THTIKNPFKRNTTRSDIDSSTGDT). A phosphoserine mark is found at S264, S268, and S276. C288 carries the cysteine methyl ester modification. C288 carries the S-farnesyl cysteine lipid modification. A propeptide spans 289–291 (IIM) (removed in mature form).

The protein belongs to the small GTPase superfamily. Rho family. Interacts with BEM4.

The protein resides in the cell membrane. It carries out the reaction GTP + H2O = GDP + phosphate + H(+). Functionally, plays an important role in cell growth. Required to keep the uninucleated state. May be involved in the organization of the cytoskeleton which affects microtubule functions. Most likely RHO3 and RHO4 of S.cerevisiae regulate partially overlapping but different pathways. The sequence is that of GTP-binding protein RHO4 (RHO4) from Saccharomyces cerevisiae (strain ATCC 204508 / S288c) (Baker's yeast).